We begin with the raw amino-acid sequence, 386 residues long: Succinyl-diaminopimelate desuccinylase (386 aa).

Residue histidine 77 coordinates Zn(2+). The active site involves aspartate 79. Residue aspartate 110 participates in Zn(2+) binding. Glutamate 144 functions as the Proton acceptor in the catalytic mechanism. Zn(2+) contacts are provided by glutamate 145, glutamate 173, and histidine 359.

The protein belongs to the peptidase M20A family. DapE subfamily. As to quaternary structure, homodimer. It depends on Zn(2+) as a cofactor. Co(2+) is required as a cofactor.

It carries out the reaction N-succinyl-(2S,6S)-2,6-diaminopimelate + H2O = (2S,6S)-2,6-diaminopimelate + succinate. It functions in the pathway amino-acid biosynthesis; L-lysine biosynthesis via DAP pathway; LL-2,6-diaminopimelate from (S)-tetrahydrodipicolinate (succinylase route): step 3/3. Catalyzes the hydrolysis of N-succinyl-L,L-diaminopimelic acid (SDAP), forming succinate and LL-2,6-diaminopimelate (DAP), an intermediate involved in the bacterial biosynthesis of lysine and meso-diaminopimelic acid, an essential component of bacterial cell walls. The sequence is that of Succinyl-diaminopimelate desuccinylase from Ralstonia pickettii (strain 12J).